Consider the following 802-residue polypeptide: Leucine--tRNA ligase (802 aa).

The short motif at 39–50 (PYPSGAGLHVGH) is the 'HIGH' region element. A 'KMSKS' region motif is present at residues 574 to 578 (KMSKS). Position 577 (K577) interacts with ATP.

This sequence belongs to the class-I aminoacyl-tRNA synthetase family.

Its subcellular location is the cytoplasm. The enzyme catalyses tRNA(Leu) + L-leucine + ATP = L-leucyl-tRNA(Leu) + AMP + diphosphate. This chain is Leucine--tRNA ligase, found in Macrococcus caseolyticus (strain JCSC5402) (Macrococcoides caseolyticum).